The sequence spans 144 residues: Large ribosomal subunit protein uL11 (144 aa).

It belongs to the universal ribosomal protein uL11 family. As to quaternary structure, part of the ribosomal stalk of the 50S ribosomal subunit. Interacts with L10 and the large rRNA to form the base of the stalk. L10 forms an elongated spine to which L12 dimers bind in a sequential fashion forming a multimeric L10(L12)X complex. In terms of processing, one or more lysine residues are methylated.

Functionally, forms part of the ribosomal stalk which helps the ribosome interact with GTP-bound translation factors. The chain is Large ribosomal subunit protein uL11 from Francisella tularensis subsp. mediasiatica (strain FSC147).